A 452-amino-acid chain; its full sequence is MALPIVAIIGRPNVGKSTLVNRLAKDRQAIVHDQPGITRDRTYRPAFWCDRDFQVVDTGGLVFDDDTEFLPLIREQAMAALTEASAAIFVVDGQLGPTAGDREISDWLRRQKVPVLLAVNKCESPEMGLIQAAEFWELGLGEPYPISGIHGSGTGELLDQLITYLPSPDELPDREEINVSIIGRPNVGKSSLLNAFLGEQRAIVSPISGTTRDAIDTVVERGDNTYRLIDTAGIRRKKNVNYGAEFFSINRAFKAIRRADVVLLVIDAIDGVTDQDIKLADRIIDEGRAAIIVVNKWDAVEKDSYTIYDYKQKVMDRLYFMEWADIIFVSAMSGKRVENIFELVDVAVEEHRRRVNTSVVNEVLEEAVKWHSPPTTKQGKQGRIYYGTQVSSQPPTIALFVNDPKRFNDNYRRYIERQFREQIGFPGTPIRLLWRGKKTRDVEPSLNRATKV.

2 consecutive EngA-type G domains span residues 4-169 and 177-352; these read PIVA…PSPD and INVS…EEHR. GTP-binding positions include 10–17, 57–61, 120–123, 183–190, 230–234, and 295–298; these read GRPNVGKS, DTGGL, NKCE, DTAGI, and NKWD. The KH-like domain maps to 353–438; sequence RRVNTSVVNE…PIRLLWRGKK (86 aa).

Belongs to the TRAFAC class TrmE-Era-EngA-EngB-Septin-like GTPase superfamily. EngA (Der) GTPase family. In terms of assembly, associates with the 50S ribosomal subunit.

Functionally, GTPase that plays an essential role in the late steps of ribosome biogenesis. The sequence is that of GTPase Der from Crocosphaera subtropica (strain ATCC 51142 / BH68) (Cyanothece sp. (strain ATCC 51142)).